We begin with the raw amino-acid sequence, 277 residues long: MNEAIHVQGLNKTFSHKSALIDLALSIQPGEMVALIGASGSGKSTLLRHLAGLACCDRSNGGQVQVLGREVQSSGRLNSQVRRLRADIGYIFQQFNLVNRLSVLDNVLLGCLGRMPRWRGSLALFNNEEKQRAMVALERVGLADLAAQRASTLSGGQQQRVAIARALTQRAEVILADEPIASLDPESARRVMEILADINRRDGKTVVVTLHQVDYAVRYCPRAVALKSGRIHFDGQAQDLSKQFLNDLYGADADASLMITERSQRVRQKARLTLAKV.

Residues 5 to 253 form the ABC transporter domain; sequence IHVQGLNKTF…FLNDLYGADA (249 aa). 37 to 44 contributes to the ATP binding site; it reads GASGSGKS.

Belongs to the ABC transporter superfamily. Phosphonates importer (TC 3.A.1.9.1) family. As to quaternary structure, the complex is composed of two ATP-binding proteins (PhnC), two transmembrane proteins (PhnE) and a solute-binding protein (PhnD).

The protein resides in the cell inner membrane. It carries out the reaction phosphonate(out) + ATP + H2O = phosphonate(in) + ADP + phosphate + H(+). Functionally, part of the ABC transporter complex PhnCDE involved in phosphonates import. Responsible for energy coupling to the transport system. The polypeptide is Phosphonates import ATP-binding protein PhnC 2 (Pseudomonas syringae pv. syringae (strain B728a)).